The following is a 1551-amino-acid chain: Serine/threonine-protein kinase MRCK gamma (1551 aa).

Residues 71-337 (FEILKVIGRG…LDDFRKHPFF (267 aa)) form the Protein kinase domain. Residues 77-85 (IGRGAFGEV) and K100 contribute to the ATP site. Residue D195 is the Proton acceptor of the active site. A phosphoserine; by autocatalysis mark is found at S216 and S228. The residue at position 234 (T234) is a Phosphothreonine; by autocatalysis. The AGC-kinase C-terminal domain occupies 338-408 (EGVDWERLAT…TSGSPFDVQS (71 aa)). 2 coiled-coil regions span residues 442–675 (QPQE…TESN) and 729–801 (KARR…QARG). The tract at residues 578 to 605 (QESSQAKTVHAAPETNGIGSPEGQSQEA) is disordered. The interval 820-886 (TEKDSAKDPG…SHTLRPRSFP (67 aa)) is disordered. Residues 839 to 849 (AEAELRPEGRR) are compositionally biased toward basic and acidic residues. Residues 877-926 (SHTLRPRSFPSPTKCLRCTSLMLGLGRQGLGCDTCGYFCHSACASQAPPC) form a Phorbol-ester/DAG-type zinc finger. The PH domain maps to 946 to 1065 (GTAYEGFLSV…WLQVLGELQR (120 aa)). The region spanning 1091-1365 (LPHALCAAVI…RPLNPEGSLF (275 aa)) is the CNH domain. In terms of domain architecture, CRIB spans 1436-1449 (ISPPTNFNHLVHVG). The tract at residues 1441–1551 (NFNHLVHVGP…PPDPESESSP (111 aa)) is disordered. Over residues 1455 to 1468 (PNTRDGTRAQEQKS) the composition is skewed to basic and acidic residues. At S1481 the chain carries Phosphoserine. Residues 1511-1527 (TSLSSESVSCPQGSLSP) are compositionally biased toward polar residues.

This sequence belongs to the protein kinase superfamily. AGC Ser/Thr protein kinase family. DMPK subfamily. Homodimer and homotetramer via the coiled coil regions. Interacts tightly with GTP-bound but not GDP-bound CDC42. Requires Mg(2+) as cofactor.

Its subcellular location is the cytoplasm. The enzyme catalyses L-seryl-[protein] + ATP = O-phospho-L-seryl-[protein] + ADP + H(+). It carries out the reaction L-threonyl-[protein] + ATP = O-phospho-L-threonyl-[protein] + ADP + H(+). With respect to regulation, maintained in an inactive, closed conformation by an interaction between the kinase domain and the negative autoregulatory C-terminal coiled-coil region. Agonist binding to the phorbol ester binding site disrupts this, releasing the kinase domain to allow N-terminus-mediated dimerization and kinase activation by transautophosphorylation. Functionally, may act as a downstream effector of CDC42 in cytoskeletal reorganization. Contributes to the actomyosin contractility required for cell invasion, through the regulation of MYPT1 and thus MLC2 phosphorylation. This is Serine/threonine-protein kinase MRCK gamma from Mus musculus (Mouse).